A 421-amino-acid polypeptide reads, in one-letter code: FBD-associated F-box protein At5g56370 (421 aa).

The 52-residue stretch at 1–52 (MDSISLLPDDFLLRILSLLPTKDVLNTSVLSKRWRYLWKLVPKLQYSLIDKN) folds into the F-box domain. The FBD domain occupies 332-382 (HWEEPSSVPETLMFVLETLEWRNYRGLKMENELASFLLKHSRRLKIATFSP).

This is FBD-associated F-box protein At5g56370 from Arabidopsis thaliana (Mouse-ear cress).